The sequence spans 418 residues: Equilibrative nucleotide transporter 6 (418 aa).

Helical transmembrane passes span 19 to 39, 56 to 76, 86 to 106, 112 to 132, 142 to 162, 186 to 206, 264 to 284, 291 to 311, 326 to 346, 353 to 373, and 392 to 412; these read AMIV…SMLT, VLTL…AYHE, LIGY…DLAT, FGPY…DATV, LMCP…GALT, MFLA…AYVL, HAVN…GFLY, GLGA…DLVG, KLIT…YFTA, WMIM…VCIM, and LVIF…LWLI.

Belongs to the SLC29A/ENT transporter (TC 2.A.57) family. As to expression, expressed in leaves and siliques.

It is found in the cell membrane. Functionally, nucleoside transporter that can mediate uptake of adenosine, uridine, guanosine or cytidine when expressed in a heterologous system (yeast). The protein is Equilibrative nucleotide transporter 6 (ENT6) of Arabidopsis thaliana (Mouse-ear cress).